The sequence spans 930 residues: Isoleucine--tRNA ligase (930 aa).

Residues 57 to 67 (PYANGNIHVGH) carry the 'HIGH' region motif. An L-isoleucyl-5'-AMP-binding site is contributed by glutamate 554. Positions 595–599 (KMSKS) match the 'KMSKS' region motif. Lysine 598 is an ATP binding site. The Zn(2+) site is built by cysteine 888, cysteine 891, cysteine 908, and cysteine 911.

Belongs to the class-I aminoacyl-tRNA synthetase family. IleS type 1 subfamily. As to quaternary structure, monomer. Requires Zn(2+) as cofactor.

It localises to the cytoplasm. It carries out the reaction tRNA(Ile) + L-isoleucine + ATP = L-isoleucyl-tRNA(Ile) + AMP + diphosphate. Its function is as follows. Catalyzes the attachment of isoleucine to tRNA(Ile). As IleRS can inadvertently accommodate and process structurally similar amino acids such as valine, to avoid such errors it has two additional distinct tRNA(Ile)-dependent editing activities. One activity is designated as 'pretransfer' editing and involves the hydrolysis of activated Val-AMP. The other activity is designated 'posttransfer' editing and involves deacylation of mischarged Val-tRNA(Ile). This Streptococcus pneumoniae serotype 19F (strain G54) protein is Isoleucine--tRNA ligase.